We begin with the raw amino-acid sequence, 479 residues long: Shugoshin (479 aa).

Residues 36–76 (SLRIRSLESEVSNLLSENVSLREQIITLTQELERFEAARTL) adopt a coiled-coil conformation. Disordered stretches follow at residues 109–145 (SRAV…GFLD), 220–247 (EHSL…QADT), and 263–479 (AKRK…SMPP). Basic and acidic residues predominate over residues 123 to 132 (QSRESGPKEV). The span at 270–286 (EDDESLFESSPSEDDEF) shows a compositional bias: acidic residues. Polar residues-rich tracts occupy residues 290–303 (RPAQ…QNEH) and 318–328 (QSPTLSSQNDH). Basic and acidic residues-rich tracts occupy residues 335–352 (PQSE…RVLE) and 379–388 (GYNEKSEKPL). A compositionally biased stretch (polar residues) spans 400–411 (KNASPKKSSTRT).

It belongs to the shugoshin family.

The protein resides in the nucleus. The protein localises to the chromosome. It is found in the centromere. Plays a central role in chromosome cohesion during cell division by preventing premature dissociation of cohesin complex from centromeres after prophase, when most of cohesin complex dissociates from chromosomes arms. This Emericella nidulans (strain FGSC A4 / ATCC 38163 / CBS 112.46 / NRRL 194 / M139) (Aspergillus nidulans) protein is Shugoshin (sgo1).